The following is a 21-amino-acid chain: Apolipophorin 2 (21 aa).

As to expression, expressed in hemolymph.

The protein localises to the secreted. In terms of biological role, constitutes the major component of lipophorin, which mediates transport for various types of lipids in hemolymph. Acts by forming lipoprotein particles that bind lipoproteins and lipids. This chain is Apolipophorin 2, found in Galleria mellonella (Greater wax moth).